We begin with the raw amino-acid sequence, 533 residues long: NEDD8-activating enzyme E1 regulatory subunit (533 aa).

The tract at residues 330 to 343 is interaction with uba3; it reads DMIADSDKFIKLQN.

Belongs to the ubiquitin-activating E1 family. ULA1 subfamily. Heterodimer of uba3 and nae1. The complex binds nedd8 and ube2m.

It functions in the pathway protein modification; protein neddylation. Its function is as follows. Regulatory subunit of the dimeric uba3-nae1 E1 enzyme. E1 activates nedd8 by first adenylating its C-terminal glycine residue with ATP, thereafter linking this residue to the side chain of the catalytic cysteine, yielding a nedd8-uba3 thioester and free AMP. E1 finally transfers nedd8 to the catalytic cysteine of ube2m. The covalent attachment of nedd8 to target proteins is known as 'neddylation' and the process is involved in the regulation of cell growth, viability and development. The protein is NEDD8-activating enzyme E1 regulatory subunit (nae1) of Xenopus laevis (African clawed frog).